Consider the following 202-residue polypeptide: Cytochrome c oxidase assembly protein CtaG (202 aa).

The Cytoplasmic segment spans residues 1–14; sequence MTSPANPSEVTRDR. A helical; Signal-anchor for type II membrane protein transmembrane segment spans residues 15–37; sequence RNRGVAFVCAGVFVAMVGMSFAA. Topologically, residues 38-202 are periplasmic; the sequence is VPLYRLFCQV…GAAKTQKLGG (165 aa).

It belongs to the COX11/CtaG family.

The protein localises to the cell inner membrane. Functionally, exerts its effect at some terminal stage of cytochrome c oxidase synthesis, probably by being involved in the insertion of the copper B into subunit I. The polypeptide is Cytochrome c oxidase assembly protein CtaG (Chelativorans sp. (strain BNC1)).